The chain runs to 113 residues: Hydrogenase maturation factor HypA (113 aa).

Residue histidine 2 coordinates Ni(2+). 4 residues coordinate Zn(2+): cysteine 73, cysteine 76, cysteine 89, and cysteine 92.

This sequence belongs to the HypA/HybF family.

Involved in the maturation of [NiFe] hydrogenases. Required for nickel insertion into the metal center of the hydrogenase. This is Hydrogenase maturation factor HypA from Legionella pneumophila subsp. pneumophila (strain Philadelphia 1 / ATCC 33152 / DSM 7513).